Here is a 459-residue protein sequence, read N- to C-terminus: Friend virus susceptibility protein 1 (459 aa).

The disordered stretch occupies residues 192–269; sequence EAELPTVLAS…LNSLAHSNRQ (78 aa). Positions 213-223 are enriched in basic and acidic residues; that stretch reads SKERTQQDKAD. The segment covering 226 to 238 has biased composition (polar residues); sequence QIQSSTSLVTSEP.

Retroviral restriction factor that prevents infection by gammaretroviruses. Acts by interacting with the capsid protein ca after entry of the virus into the cell. This interaction presumably disrupt the capsid thereby inactivating the viral genome, making it unable to enter host nucleus and integrate into host genome. The protein is Friend virus susceptibility protein 1 (Fv1) of Mus musculus (Mouse).